A 336-amino-acid chain; its full sequence is Ethanol acetyltransferase 1 (336 aa).

Residues 1-14 constitute a mitochondrion transit peptide; the sequence is MFPTRVLRSTLQKL. The AB hydrolase-1 domain occupies 44–296; the sequence is PIVFLHGIFG…VNSSHDILDQ (253 aa). Residues S117, D141, and H291 each act as charge relay system in the active site.

Belongs to the AB hydrolase superfamily.

It localises to the mitochondrion. It carries out the reaction ethanol + acetyl-CoA = ethyl acetate + CoA. The enzyme catalyses acetyl-CoA + H2O = acetate + CoA + H(+). It catalyses the reaction ethyl acetate + H2O = ethanol + acetate + H(+). In terms of biological role, alcohol acetyltransferase that catalyzes the synthesis of ethyl acetate from ethanol and acetyl-CoA. Can also function as a thioesterase by hydrolyzing acetyl-CoA in the absence of ethanol, as well as esterase hydrolyzing ethyl acetate. In Cyberlindnera jadinii (strain ATCC 18201 / CBS 1600 / BCRC 20928 / JCM 3617 / NBRC 0987 / NRRL Y-1542) (Torula yeast), this protein is Ethanol acetyltransferase 1 (EAT1).